The primary structure comprises 439 residues: tRNA modification GTPase MnmE (439 aa).

Residues R20, E78, and K116 each coordinate (6S)-5-formyl-5,6,7,8-tetrahydrofolate. One can recognise a TrmE-type G domain in the interval 211 to 364; it reads GIYVAILGEP…LLSAIQKKVE (154 aa). GTP contacts are provided by residues 221–226, 240–246, and 265–268; these read NSGKST, SEYAGTT, and DTAG. Residues S225 and T246 each coordinate Mg(2+). K439 is a (6S)-5-formyl-5,6,7,8-tetrahydrofolate binding site.

The protein belongs to the TRAFAC class TrmE-Era-EngA-EngB-Septin-like GTPase superfamily. TrmE GTPase family. As to quaternary structure, homodimer. Heterotetramer of two MnmE and two MnmG subunits. It depends on K(+) as a cofactor.

Its subcellular location is the cytoplasm. Functionally, exhibits a very high intrinsic GTPase hydrolysis rate. Involved in the addition of a carboxymethylaminomethyl (cmnm) group at the wobble position (U34) of certain tRNAs, forming tRNA-cmnm(5)s(2)U34. The sequence is that of tRNA modification GTPase MnmE from Ehrlichia ruminantium (strain Gardel).